The sequence spans 161 residues: Chorion class B protein L12 (161 aa).

An N-terminal signal peptide occupies residues 1–21 (MAAKLILFVCATALVAQSVLS). Positions 22–52 (IGCGCGGRGYGGLGYGGLGYGGLGGGCGRGF) are left arm. Tandem repeats lie at residues 30–34 (GYGGL), 35–39 (GYGGL), and 40–44 (GYGGL). The segment at 30-44 (GYGGLGYGGLGYGGL) is 3 X 5 AA tandem repeats of G-Y-G-G-L. The interval 53-121 (SGGGLPVATA…GNGAVGITRE (69 aa)) is central domain. The segment at 122–161 (GGFGYGAGYGDGYGLGFGGYGGGYGLGNGGYGGCGCGWGY) is right arm (Gly-rich tandem repeats).

The protein belongs to the chorion protein family.

In terms of biological role, this protein is one of many from the eggshell of the silk moth. In Bombyx mori (Silk moth), this protein is Chorion class B protein L12.